We begin with the raw amino-acid sequence, 166 residues long: Orofacial cleft 1 candidate gene 1 protein homolog (166 aa).

The tract at residues 1–22 (MDKEKFQQKAVKQTKQKKSTSA) is disordered.

In Mus musculus (Mouse), this protein is Orofacial cleft 1 candidate gene 1 protein homolog (Ofcc1).